Consider the following 379-residue polypeptide: Bifunctional riboflavin kinase/FMN phosphatase (379 aa).

Ser-2 is subject to N-acetylserine. Catalysis depends on Asp-17, which acts as the Nucleophile; for FMN phosphatase activity. Mg(2+)-binding residues include Asp-17 and Asp-19. The active-site Proton donor; for FMN phosphatase activity is the Asp-19. Positions 248, 254, 260, and 262 each coordinate ATP. Thr-260 contacts Mg(2+). Glu-312 functions as the Nucleophile; for riboflavin kinase activity in the catalytic mechanism. ATP-binding residues include Leu-315, His-317, and Tyr-324. Arg-337 and Phe-342 together coordinate FMN.

The protein in the N-terminal section; belongs to the HAD-like hydrolase superfamily. CbbY/CbbZ/Gph/YieH family. It in the C-terminal section; belongs to the flavokinase family. Monomer. The cofactor is Mg(2+).

It catalyses the reaction riboflavin + ATP = FMN + ADP + H(+). It carries out the reaction FMN + H2O = riboflavin + phosphate. It functions in the pathway cofactor biosynthesis; FMN biosynthesis; FMN from riboflavin (ATP route): step 1/1. Functionally, bifunctional enzyme that catalyzes the hydrolysis of flavin-mononucleotide (FMN) to riboflavin (vitamin B2) and the phosphorylation of riboflavin to form (FMN) coenzyme. This is Bifunctional riboflavin kinase/FMN phosphatase from Arabidopsis thaliana (Mouse-ear cress).